A 178-amino-acid chain; its full sequence is Interleukin-1 receptor antagonist protein (178 aa).

A signal peptide spans 1-26 (MEICWGPYSHLISLLLILLFHSEAAC). A disulfide bridge connects residues C92 and C142. N110 is a glycosylation site (N-linked (GlcNAc...) asparagine).

Belongs to the IL-1 family.

It is found in the secreted. Its subcellular location is the cytoplasm. Functionally, anti-inflammatory antagonist of interleukin-1 family of proinflammatory cytokines such as interleukin-1beta/IL1B and interleukin-1alpha/IL1A. Protects from immune dysregulation and uncontrolled systemic inflammation triggered by IL1 for a range of innate stimulatory agents such as pathogens. In Mus musculus (Mouse), this protein is Interleukin-1 receptor antagonist protein (Il1rn).